We begin with the raw amino-acid sequence, 235 residues long: Carbonic anhydrase 1 (235 aa).

An Alpha-carbonic anhydrase domain is found at 1-235 (GNKQSPVDIK…LKGRTVKASF (235 aa)). The active-site Proton donor/acceptor is H40. The Zn(2+) site is built by H69, H71, and H94. Substrate is bound by residues T174 and 174–175 (TH).

Belongs to the alpha-carbonic anhydrase family. The cofactor is Zn(2+).

It is found in the cytoplasm. The catalysed reaction is hydrogencarbonate + H(+) = CO2 + H2O. It carries out the reaction urea = cyanamide + H2O. Inhibited by acetazolamide. Catalyzes the reversible hydration of carbon dioxide. Can hydrate cyanamide to urea. This Oryctolagus cuniculus (Rabbit) protein is Carbonic anhydrase 1 (CA1).